Consider the following 157-residue polypeptide: Ubiquitin-like protein 4A (157 aa).

Positions M1–K76 constitute a Ubiquitin-like domain. K48 participates in a covalent cross-link: Glycyl lysine isopeptide (Lys-Gly) (interchain with G-Cter in ubiquitin). S90 carries the post-translational modification Phosphoserine. The interval W96–L138 is required and sufficient for interaction with BAG6.

In terms of assembly, component of the BAG6/BAT3 complex, at least composed of BAG6, UBL4A and GET4/TRC35. Interacts with BAG6; the interaction is direct and required for UBL4A protein stability. Interacts with USP13; may be indirect via BAG6. Post-translationally, polyubiquitinated. Ubiquitination by AMFR and deubiquitination by USP13 may regulate the interaction between the BAG6/BAT complex and SGTA and therefore may regulate client proteins fate.

It is found in the cytoplasm. It localises to the cytosol. Its subcellular location is the nucleus. Functionally, as part of a cytosolic protein quality control complex, the BAG6/BAT3 complex, maintains misfolded and hydrophobic patches-containing proteins in a soluble state and participates in their proper delivery to the endoplasmic reticulum or alternatively can promote their sorting to the proteasome where they undergo degradation. The BAG6/BAT3 complex is involved in the post-translational delivery of tail-anchored/type II transmembrane proteins to the endoplasmic reticulum membrane. Recruited to ribosomes, it interacts with the transmembrane region of newly synthesized tail-anchored proteins and together with SGTA and ASNA1 mediates their delivery to the endoplasmic reticulum. Client proteins that cannot be properly delivered to the endoplasmic reticulum are ubiquitinated and sorted to the proteasome. Similarly, the BAG6/BAT3 complex also functions as a sorting platform for proteins of the secretory pathway that are mislocalized to the cytosol either delivering them to the proteasome for degradation or to the endoplasmic reticulum. The BAG6/BAT3 complex also plays a role in the endoplasmic reticulum-associated degradation (ERAD), a quality control mechanism that eliminates unwanted proteins of the endoplasmic reticulum through their retrotranslocation to the cytosol and their targeting to the proteasome. It maintains these retrotranslocated proteins in an unfolded yet soluble state condition in the cytosol to ensure their proper delivery to the proteasome. This Rattus norvegicus (Rat) protein is Ubiquitin-like protein 4A (Ubl4a).